The sequence spans 84 residues: Large ribosomal subunit protein bL27 (84 aa).

The segment at 1-22 (MAHKKAGGSTRNGRDSESKRLG) is disordered.

Belongs to the bacterial ribosomal protein bL27 family.

In Shewanella woodyi (strain ATCC 51908 / MS32), this protein is Large ribosomal subunit protein bL27.